Consider the following 33-residue polypeptide: Rhinophrynin-33 (33 aa).

In terms of tissue distribution, expressed by the skin glands.

It localises to the secreted. In terms of biological role, non-cytotoxic peptide with immunosuppressive and insulinotropic effects. Induces an increased production of the anti-inflammatory cytokine IL-10 and inhibits production of the pro-inflammatory cytokines TNF-alpha and IL-1beta, when incubated with mouse peritoneal cells. Does not display growth-inhibitory activity against the Gram-positive S.epidermidis and Gram-negative E.coli bacteria and against the opportunistic yeast pathogen C.parapsilosis (MIC&gt;128 uM). In addition, it lacks cytotoxic activity against mouse erythrocytes (LC(50)&gt;500 uM) and A549 human non-small cell lung adenocarcinoma cells (LC(50)&gt;100 uM). Moderately stimulates insulin release from rat clonal beta-cells and mouse pancreatic islets. Functionally, non-cytotoxic peptide with immunosuppressive but without insulinotropic effects. Inhibits production of the pro-inflammatory cytokines TNF-alpha, but has no effect on IL-10 and IL-1beta production, when incubated with mouse peritoneal cells. Has no activity of stimulation of insulin release. This chain is Rhinophrynin-33, found in Rhinophrynus dorsalis (Mexican burrowing toad).